A 512-amino-acid polypeptide reads, in one-letter code: Mucin-13 (512 aa).

A signal peptide spans 1–18; it reads MKAIIHLTLLALLSVNTA. The Extracellular portion of the chain corresponds to 19 to 421; that stretch reads TNQGNSADAV…GLDCKDKFQL (403 aa). A compositionally biased stretch (polar residues) spans 22–38; that stretch reads GNSADAVTTTETATSGP. Disordered stretches follow at residues 22-67 and 133-176; these read GNSA…PTAT and MVPS…PSNP. Residues 53–67 show a composition bias toward low complexity; the sequence is TASTTANTPSFPTAT. Polar residues predominate over residues 135-176; the sequence is PSETQSNNEMSPTTEDNQSSGPPTGTALLETSTLNSTGPSNP. N151 and N169 each carry an N-linked (GlcNAc...) asparagine glycan. In terms of domain architecture, EGF-like 1 spans 173–211; it reads PSNPCQDDPCADNSLCVKLHNTSFCLCLEGYYYNSSTCK. 3 disulfides stabilise this stretch: C177/C188, C182/C197, and C199/C210. N193, N206, N284, and N332 each carry an N-linked (GlcNAc...) asparagine glycan. The SEA domain maps to 212–336; that stretch reads KGKVFPGKIS…DYYGCNQTAD (125 aa). 2 EGF-like domains span residues 322-361 and 363-404; these read LTLR…PFCV and SSLK…GNCQ. Disulfide bonds link C326/C338, C331/C344, C346/C360, C367/C378, C371/C389, and C391/C403. The helical transmembrane segment at 422-442 threads the bilayer; it reads ILTIVGTIAGIVILSMIIALI. At 443–512 the chain is on the cytoplasmic side; it reads VTARSNNKTK…RHSSMPRPDY (70 aa). The segment covering 493–505 has biased composition (polar residues); the sequence is RDSQMQNPYSRHS. The segment at 493–512 is disordered; the sequence is RDSQMQNPYSRHSSMPRPDY.

As to quaternary structure, homodimer of beta subunits. Post-translationally, cleaved into two subunits, alpha and beta, probably between the first EGF domain and the SEA domain. Beta subunit contains the cytoplasmic tail and alpha subunit the extracellular tail. The homooligomerization into dimers is dependent on intrachain disulfide bonds. Highly N-glycosylated. As to expression, highly expressed in epithelial tissues, particularly those of the gastrointestinal and respiratory tracts, such as large intestine and trachea, followed by kidney, small intestine, appendix and stomach.

The protein localises to the cell membrane. It is found in the apical cell membrane. It localises to the secreted. Epithelial and hemopoietic transmembrane mucin that may play a role in cell signaling. The sequence is that of Mucin-13 (MUC13) from Homo sapiens (Human).